The primary structure comprises 216 residues: Probable transaldolase (216 aa).

Residue Lys84 is the Schiff-base intermediate with substrate of the active site.

Belongs to the transaldolase family. Type 3B subfamily.

Its subcellular location is the cytoplasm. It catalyses the reaction D-sedoheptulose 7-phosphate + D-glyceraldehyde 3-phosphate = D-erythrose 4-phosphate + beta-D-fructose 6-phosphate. The protein operates within carbohydrate degradation; pentose phosphate pathway; D-glyceraldehyde 3-phosphate and beta-D-fructose 6-phosphate from D-ribose 5-phosphate and D-xylulose 5-phosphate (non-oxidative stage): step 2/3. In terms of biological role, transaldolase is important for the balance of metabolites in the pentose-phosphate pathway. The protein is Probable transaldolase of Lysinibacillus sphaericus (strain C3-41).